Consider the following 477-residue polypeptide: Bifunctional protein HldE (477 aa).

Residues 1–318 are ribokinase; sequence MKVNLPAFER…ENAVRGRADT (318 aa). 195 to 198 contacts ATP; it reads NLSE. Asp-264 is an active-site residue. The tract at residues 344–477 is cytidylyltransferase; that stretch reads MTNGVFDILH…IKKIQTESEK (134 aa).

In the N-terminal section; belongs to the carbohydrate kinase PfkB family. The protein in the C-terminal section; belongs to the cytidylyltransferase family. As to quaternary structure, homodimer.

The enzyme catalyses D-glycero-beta-D-manno-heptose 7-phosphate + ATP = D-glycero-beta-D-manno-heptose 1,7-bisphosphate + ADP + H(+). The catalysed reaction is D-glycero-beta-D-manno-heptose 1-phosphate + ATP + H(+) = ADP-D-glycero-beta-D-manno-heptose + diphosphate. Its pathway is nucleotide-sugar biosynthesis; ADP-L-glycero-beta-D-manno-heptose biosynthesis; ADP-L-glycero-beta-D-manno-heptose from D-glycero-beta-D-manno-heptose 7-phosphate: step 1/4. It participates in nucleotide-sugar biosynthesis; ADP-L-glycero-beta-D-manno-heptose biosynthesis; ADP-L-glycero-beta-D-manno-heptose from D-glycero-beta-D-manno-heptose 7-phosphate: step 3/4. Its function is as follows. Catalyzes the phosphorylation of D-glycero-D-manno-heptose 7-phosphate at the C-1 position to selectively form D-glycero-beta-D-manno-heptose-1,7-bisphosphate. Functionally, catalyzes the ADP transfer from ATP to D-glycero-beta-D-manno-heptose 1-phosphate, yielding ADP-D-glycero-beta-D-manno-heptose. The chain is Bifunctional protein HldE from Salmonella enteritidis PT4 (strain P125109).